The primary structure comprises 452 residues: Phosphoglucosamine mutase (452 aa).

Serine 103 serves as the catalytic Phosphoserine intermediate. Positions 103, 244, 246, and 248 each coordinate Mg(2+). Residue serine 103 is modified to Phosphoserine.

It belongs to the phosphohexose mutase family. Mg(2+) serves as cofactor. Activated by phosphorylation.

It catalyses the reaction alpha-D-glucosamine 1-phosphate = D-glucosamine 6-phosphate. Catalyzes the conversion of glucosamine-6-phosphate to glucosamine-1-phosphate. The sequence is that of Phosphoglucosamine mutase from Rhodospirillum rubrum (strain ATCC 11170 / ATH 1.1.1 / DSM 467 / LMG 4362 / NCIMB 8255 / S1).